The primary structure comprises 442 residues: Cysteine proteinase 4 (442 aa).

An N-terminal signal peptide occupies residues 1–17; that stretch reads MRVLSFLCLLLVSYASA. Residues 18 to 111 constitute a propeptide, activation peptide; it reads KQQFSELQYR…TEEEKIFSTP (94 aa). 2 cysteine pairs are disulfide-bonded: Cys132/Cys178 and Cys169/Cys212. Cys135 is a catalytic residue. 2 N-linked (GlcNAc...) asparagine glycosylation sites follow: Asn228 and Asn254. Cys270 and Cys428 form a disulfide bridge. Residue His277 is part of the active site. A disordered region spans residues 286 to 396; the sequence is SGSSSSSGSS…SGSGSGAVEA (111 aa). A compositionally biased stretch (low complexity) spans 287–376; sequence GSSSSSGSSS…SASGQASASG (90 aa). Gly residues predominate over residues 377-391; that stretch reads SGSGSGSGSGSGSGS. The active site involves Asn406.

It belongs to the peptidase C1 family. In terms of processing, glycosylated; contains GlcNAc-alpha-1-P-Ser residues and fucose.

The protein resides in the lysosome. In Dictyostelium discoideum (Social amoeba), this protein is Cysteine proteinase 4 (cprD).